Consider the following 344-residue polypeptide: Putative cyclin-Y-like protein 3 (344 aa).

The region spanning 40–170 (ERYANRSLAI…FLELLEFNIH (131 aa)) is the Cyclin N-terminal domain.

This sequence belongs to the cyclin family. Cyclin Y subfamily.

The protein is Putative cyclin-Y-like protein 3 (CCNYL3) of Homo sapiens (Human).